The chain runs to 273 residues: Ribosomal RNA small subunit methyltransferase A (273 aa).

Positions 18, 20, 45, 66, 91, and 113 each coordinate S-adenosyl-L-methionine.

It belongs to the class I-like SAM-binding methyltransferase superfamily. rRNA adenine N(6)-methyltransferase family. RsmA subfamily.

It is found in the cytoplasm. The enzyme catalyses adenosine(1518)/adenosine(1519) in 16S rRNA + 4 S-adenosyl-L-methionine = N(6)-dimethyladenosine(1518)/N(6)-dimethyladenosine(1519) in 16S rRNA + 4 S-adenosyl-L-homocysteine + 4 H(+). In terms of biological role, specifically dimethylates two adjacent adenosines (A1518 and A1519) in the loop of a conserved hairpin near the 3'-end of 16S rRNA in the 30S particle. May play a critical role in biogenesis of 30S subunits. The sequence is that of Ribosomal RNA small subunit methyltransferase A from Erwinia tasmaniensis (strain DSM 17950 / CFBP 7177 / CIP 109463 / NCPPB 4357 / Et1/99).